Here is a 130-residue protein sequence, read N- to C-terminus: ATP synthase epsilon chain (130 aa).

The protein belongs to the ATPase epsilon chain family. F-type ATPases have 2 components, CF(1) - the catalytic core - and CF(0) - the membrane proton channel. CF(1) has five subunits: alpha(3), beta(3), gamma(1), delta(1), epsilon(1). CF(0) has three main subunits: a, b and c.

Its subcellular location is the cell inner membrane. Functionally, produces ATP from ADP in the presence of a proton gradient across the membrane. The protein is ATP synthase epsilon chain of Campylobacter hominis (strain ATCC BAA-381 / DSM 21671 / CCUG 45161 / LMG 19568 / NCTC 13146 / CH001A).